The primary structure comprises 354 residues: Serum paraoxonase/lactonase 3 (354 aa).

A disulfide bond links Cys-42 and Cys-352. N-linked (GlcNAc...) asparagine glycosylation occurs at Asn-50. Residues Glu-53 and Asp-54 each coordinate Ca(2+). His-114 (proton acceptor) is an active-site residue. Ile-116 is a Ca(2+) binding site. Ser-165 is modified (phosphoserine). Positions 167, 168, 223, 268, and 269 each coordinate Ca(2+). An N-linked (GlcNAc...) asparagine glycan is attached at Asn-269.

This sequence belongs to the paraoxonase family. As to quaternary structure, homodimer. Requires Ca(2+) as cofactor. In terms of processing, glycosylated. Post-translationally, the signal sequence is not cleaved.

Its subcellular location is the secreted. It localises to the extracellular space. It carries out the reaction a phenyl acetate + H2O = a phenol + acetate + H(+). The enzyme catalyses An aryl dialkyl phosphate + H2O = dialkyl phosphate + an aryl alcohol.. The catalysed reaction is an N-acyl-L-homoserine lactone + H2O = an N-acyl-L-homoserine + H(+). Functionally, has low activity towards the organophosphate paraxon and aromatic carboxylic acid esters. Rapidly hydrolyzes lactones such as statin prodrugs (e.g. lovastatin). Hydrolyzes aromatic lactones and 5- or 6-member ring lactones with aliphatic substituents but not simple lactones or those with polar substituents. The sequence is that of Serum paraoxonase/lactonase 3 (PON3) from Oryctolagus cuniculus (Rabbit).